A 64-amino-acid polypeptide reads, in one-letter code: Large ribosomal subunit protein uL30 (64 aa).

Part of the 50S ribosomal subunit. In terms of processing, the protein is methylated on either Ala-2 or Lys-3.

The sequence is that of Large ribosomal subunit protein uL30 from Rhodopseudomonas palustris (strain ATCC BAA-98 / CGA009).